The sequence spans 362 residues: Probable aromatic amino acid hydroxylase (362 aa).

Residues H200 and H205 each contribute to the Fe cation site.

Belongs to the biopterin-dependent aromatic amino acid hydroxylase family. It depends on Fe(2+) as a cofactor.

The sequence is that of Probable aromatic amino acid hydroxylase from Chlamydia pneumoniae (Chlamydophila pneumoniae).